A 248-amino-acid polypeptide reads, in one-letter code: Probable transcriptional regulatory protein Desal_2886 (248 aa).

Positions 1–21 (MAGHSKWANIQHRKGRQDAKR) are disordered.

The protein belongs to the TACO1 family.

The protein localises to the cytoplasm. The polypeptide is Probable transcriptional regulatory protein Desal_2886 (Maridesulfovibrio salexigens (strain ATCC 14822 / DSM 2638 / NCIMB 8403 / VKM B-1763) (Desulfovibrio salexigens)).